We begin with the raw amino-acid sequence, 151 residues long: Chromophore lyase CpcS/CpeS homolog (151 aa).

It belongs to the CpcS/CpeS biliprotein lyase family.

Its subcellular location is the plastid. The protein localises to the chloroplast. Its function is as follows. Might function to covalently attach a chromophore to Cys residue(s) of phycobiliproteins. The protein is Chromophore lyase CpcS/CpeS homolog of Gracilaria tenuistipitata var. liui (Red alga).